The sequence spans 517 residues: Cytochrome P450 52A8 (517 aa).

Residue Cys464 coordinates heme.

It belongs to the cytochrome P450 family. Requires heme as cofactor.

Together with an NADPH cytochrome P450 the enzyme system catalyzes the terminal hydroxylation as the first step in the assimilation of alkanes and fatty acids. Preferentially hydroxylates lauric acid. The polypeptide is Cytochrome P450 52A8 (CYP52A8) (Candida tropicalis (Yeast)).